Here is a 292-residue protein sequence, read N- to C-terminus: Probable deoxyhypusine synthase (292 aa).

Lys267 acts as the Nucleophile in catalysis.

Belongs to the deoxyhypusine synthase family. Requires NAD(+) as cofactor.

It catalyses the reaction [eIF5A protein]-L-lysine + spermidine = [eIF5A protein]-deoxyhypusine + propane-1,3-diamine. It functions in the pathway protein modification; eIF5A hypusination. Functionally, catalyzes the NAD-dependent oxidative cleavage of spermidine and the subsequent transfer of the butylamine moiety of spermidine to the epsilon-amino group of a specific lysine residue of the eIF-5A precursor protein to form the intermediate deoxyhypusine residue. The chain is Probable deoxyhypusine synthase (dys) from Pyrobaculum aerophilum (strain ATCC 51768 / DSM 7523 / JCM 9630 / CIP 104966 / NBRC 100827 / IM2).